A 123-amino-acid chain; its full sequence is Putative iron-sulfur cluster insertion protein ErpA (123 aa).

Residues Cys-51, Cys-115, and Cys-117 each contribute to the iron-sulfur cluster site.

This sequence belongs to the HesB/IscA family. As to quaternary structure, homodimer. Iron-sulfur cluster is required as a cofactor.

Functionally, required for insertion of 4Fe-4S clusters. The sequence is that of Putative iron-sulfur cluster insertion protein ErpA from Bordetella avium (strain 197N).